The chain runs to 372 residues: Alpha-parvin (372 aa).

The segment covering 1 to 11 has biased composition (low complexity); the sequence is MATSPQKSPSV. Positions 1–45 are disordered; sequence MATSPQKSPSVPKSPTPKSPPSRKKDDSFLGKLGGTLARRKKAKE. Ala2 is modified (N-acetylalanine). A phosphoserine mark is found at Ser8, Ser14, and Ser19. Residues 21-25 are interaction with ARHGAP31; that stretch reads PSRKK. 2 positions are modified to phosphoserine: Ser28 and Ser62. 2 consecutive Calponin-homology (CH) domains span residues 95–202 and 262–369; these read QELM…QYFR and NVVK…TKYR. Positions 223 to 372 are required for interaction with TESK1 and ILK; sequence GILQSRQIQE…NLFTKYRNVE (150 aa).

It belongs to the parvin family. Component of the heterotrimeric IPP (ILK-PINCH-PARVIN) complex composed of ILK, LIMS1/PINCH and PARVA; the complex binds to F-actin via the C-terminal tail of LIMS1 and the N-terminal region of PARVA, promoting F-actin filament bundling. Formation of the IPP complex is dependent on protein kinase C and precedes integrin-mediated cell adhesion and spreading. Interacts with TGFB1I1. Interacts with ARHGAP31. Interacts with the actin cytoskeleton. Interacts (via C-terminus) with TESK1 (via C-terminus); the interaction inhibits TESK1 kinase activity. Interacts with PXN/PAXILLIN (via LD motif 4). In terms of tissue distribution, widely expressed, with highest levels in heart, skeletal muscle, kidney and liver.

The protein resides in the cell junction. It localises to the focal adhesion. Its subcellular location is the cell membrane. The protein localises to the cytoplasm. It is found in the cytoskeleton. The protein resides in the myofibril. It localises to the sarcomere. Its subcellular location is the z line. Its function is as follows. Plays a role in sarcomere organization and in smooth muscle cell contraction. Required for normal development of the embryonic cardiovascular system, and for normal septation of the heart outflow tract. Plays a role in sprouting angiogenesis and is required for normal adhesion of vascular smooth muscle cells to endothelial cells during blood vessel development. Plays a role in the reorganization of the actin cytoskeleton, formation of lamellipodia and ciliogenesis. Plays a role in the establishment of cell polarity, cell adhesion, cell spreading, and directed cell migration. Within the IPP (ILK-PINCH-PARVIN) complex, binds to F-actin, promoting F-actin bundling, a process required to generate force for actin cytoskeleton reorganization and subsequent dynamic cell adhesion events such as cell spreading and migration. The polypeptide is Alpha-parvin (PARVA) (Homo sapiens (Human)).